The chain runs to 128 residues: Secreted RxLR effector protein RXLR-C09 (128 aa).

An N-terminal signal peptide occupies residues 1 to 22 (MRFCLVFIRLAAFVILSGGATS). Positions 58-75 (RLLRLNDQADISGHDEER) match the RxLR-dEER motif.

It belongs to the RxLR effector family.

It localises to the secreted. The protein resides in the host cell membrane. The protein localises to the host nucleus. Its function is as follows. Secreted effector that suppresses pattern-triggered immunity (PTI) in plant host. This chain is Secreted RxLR effector protein RXLR-C09, found in Plasmopara halstedii (Downy mildew of sunflower).